The sequence spans 563 residues: Solute carrier family 22 member 6 (563 aa).

Residues 1-9 (MAFNDLLQQ) are Cytoplasmic-facing. A helical membrane pass occupies residues 10-30 (VGGVGRFQQIQVTLVVLPLLL). The Extracellular portion of the chain corresponds to 31-135 (MASHNTLQNF…LVCSHRALRQ (105 aa)). Residues Asn39, Asn56, Asn92, Asn97, and Asn113 are each glycosylated (N-linked (GlcNAc...) asparagine). A helical transmembrane segment spans residues 136-156 (LAQSLYMVGVLLGAMVFGYLA). Residues 157-164 (DRLGRRKV) are Cytoplasmic-facing. Residues 165-187 (LILNYLQTAVSGTCAAFAPNFPI) traverse the membrane as a helical segment. The Extracellular portion of the chain corresponds to 188–190 (YCA). Residues 191–213 (FRLLSGMALAGISLNCMTLNVEW) traverse the membrane as a helical segment. Topologically, residues 214–224 (MPIHTRACVGT) are cytoplasmic. Residues 225–245 (LIGYVYSLGQFLLAGVAYAVP) traverse the membrane as a helical segment. The Extracellular segment spans residues 246–248 (HWR). A helical transmembrane segment spans residues 249 to 269 (HLQLLVSAPFFAFFIYSWFFI). At 270-337 (ESARWHSSSG…ELLRCPTLRH (68 aa)) the chain is on the cytoplasmic side. Residues 338 to 358 (LFLCLSMLWFATSFAYYGLVM) form a helical membrane-spanning segment. The Extracellular portion of the chain corresponds to 359-368 (DLQGFGVSIY). Residues 369–389 (LIQVIFGAVDLPAKLVGFLVI) form a helical membrane-spanning segment. The Cytoplasmic segment spans residues 390–395 (NSLGRR). Residues 396 to 416 (PAQMAALLLAGICILLNGVIP) traverse the membrane as a helical segment. The Extracellular portion of the chain corresponds to 417–425 (QDQSIVRTS). Residues 426 to 446 (LAVLGKGCLAASFNCIFLYTG) traverse the membrane as a helical segment. Topologically, residues 447 to 455 (ELYPTMIRQ) are cytoplasmic. A helical transmembrane segment spans residues 456–475 (TGMGMGSTMARVGSIVSPLV). At 476-484 (SMTAELYPS) the chain is on the extracellular side. Residues 485–505 (MPLFIYGAVPVAASAVTVLLP) form a helical membrane-spanning segment. Residues 506-563 (ETLGQPLPDTVQDLESRWAPTQKEAGIYPRKGKQTRQQQEHQKYMVPLQASAQEKNGL) lie on the Cytoplasmic side of the membrane. The segment at 525-563 (PTQKEAGIYPRKGKQTRQQQEHQKYMVPLQASAQEKNGL) is disordered.

Belongs to the major facilitator (TC 2.A.1) superfamily. Organic cation transporter (TC 2.A.1.19) family. In terms of processing, glycosylated. Glycosylation at Asn-113 may occur at a secondary level. Glycosylation is necessary for proper targeting of the transporter to the plasma membrane. Strongly expressed in kidney. Expressed at lower level in liver, skeletal muscle, brain and placenta. In kidney, found at the basolateral membrane of the proximal tubule. In testis, primarily localized to the basal membrane of Sertoli cells and weakly expressed in Leydig cells and vascular endothelial cells.

It localises to the basolateral cell membrane. The protein resides in the basal cell membrane. The catalysed reaction is (6R)-L-erythro-5,6,7,8-tetrahydrobiopterin(out) + a dicarboxylate(in) = (6R)-L-erythro-5,6,7,8-tetrahydrobiopterin(in) + a dicarboxylate(out). It carries out the reaction L-erythro-7,8-dihydrobiopterin(out) + a dicarboxylate(in) = L-erythro-7,8-dihydrobiopterin(in) + a dicarboxylate(out). The enzyme catalyses L-sepiapterin(out) + a dicarboxylate(in) = L-sepiapterin(in) + a dicarboxylate(out). It catalyses the reaction prostaglandin F2alpha(out) + a dicarboxylate(in) = prostaglandin F2alpha(in) + a dicarboxylate(out). The catalysed reaction is prostaglandin E2(out) + a dicarboxylate(in) = prostaglandin E2(in) + a dicarboxylate(out). It carries out the reaction 3',5'-cyclic AMP(out) + a dicarboxylate(in) = 3',5'-cyclic AMP(in) + a dicarboxylate(out). The enzyme catalyses 3',5'-cyclic GMP(out) + a dicarboxylate(in) = 3',5'-cyclic GMP(in) + a dicarboxylate(out). It catalyses the reaction urate(out) + a dicarboxylate(in) = urate(in) + a dicarboxylate(out). The catalysed reaction is kynurenate(out) + glutarate(in) = kynurenate(in) + glutarate(out). It carries out the reaction (indol-3-yl)acetate(out) + a dicarboxylate(in) = (indol-3-yl)acetate(in) + a dicarboxylate(out). The enzyme catalyses indoxyl sulfate(out) + a dicarboxylate(in) = indoxyl sulfate(in) + a dicarboxylate(out). It catalyses the reaction N-benzoylglycine(out) + a dicarboxylate(in) = N-benzoylglycine(in) + a dicarboxylate(out). The catalysed reaction is 3-carboxy-4-methyl-5-propyl-2-furanpropanoate(out) + a dicarboxylate(in) = 3-carboxy-4-methyl-5-propyl-2-furanpropanoate(in) + a dicarboxylate(out). Secondary active transporter that functions as a Na(+)-independent organic anion (OA)/dicarboxylate antiporter where the uptake of one molecule of OA into the cell is coupled with an efflux of one molecule of intracellular dicarboxylate such as 2-oxoglutarate or glutarate. Mediates the uptake of OA across the basolateral side of proximal tubule epithelial cells, thereby contributing to the renal elimination of endogenous OA from the systemic circulation into the urine. Functions as a biopterin transporters involved in the uptake and the secretion of coenzymes tetrahydrobiopterin (BH4), dihydrobiopterin (BH2) and sepiapterin to urine, thereby determining baseline levels of blood biopterins. Transports prostaglandin E2 (PGE2) and prostaglandin F2-alpha (PGF2-alpha) and may contribute to their renal excretion. Also mediates the uptake of cyclic nucleotides such as cAMP and cGMP. Involved in the transport of neuroactive tryptophan metabolites kynurenate (KYNA) and xanthurenate (XA) and may contribute to their secretion from the brain. May transport glutamate. Also involved in the disposition of uremic toxins and potentially toxic xenobiotics by the renal organic anion secretory pathway, helping reduce their undesired toxicological effects on the body. Uremic toxins include the indoxyl sulfate (IS), hippurate/N-benzoylglycine (HA), indole acetate (IA), 3-carboxy-4- methyl-5-propyl-2-furanpropionate (CMPF) and urate. Xenobiotics include the mycotoxin ochratoxin (OTA). May also contribute to the transport of organic compounds in testes across the blood-testis-barrier. This is Solute carrier family 22 member 6 from Homo sapiens (Human).